Here is a 312-residue protein sequence, read N- to C-terminus: uncharacterized protein (312 aa).

The protein resides in the mitochondrion. This is an uncharacterized protein from Schizosaccharomyces pombe (strain 972 / ATCC 24843) (Fission yeast).